Consider the following 316-residue polypeptide: Pantothenate kinase (316 aa).

Gly-95 to Ser-102 serves as a coordination point for ATP.

This sequence belongs to the prokaryotic pantothenate kinase family.

The protein resides in the cytoplasm. It carries out the reaction (R)-pantothenate + ATP = (R)-4'-phosphopantothenate + ADP + H(+). The protein operates within cofactor biosynthesis; coenzyme A biosynthesis; CoA from (R)-pantothenate: step 1/5. The polypeptide is Pantothenate kinase (Shewanella sp. (strain MR-7)).